The chain runs to 238 residues: 2-C-methyl-D-erythritol 4-phosphate cytidylyltransferase (238 aa).

Belongs to the IspD/TarI cytidylyltransferase family. IspD subfamily.

The catalysed reaction is 2-C-methyl-D-erythritol 4-phosphate + CTP + H(+) = 4-CDP-2-C-methyl-D-erythritol + diphosphate. The protein operates within isoprenoid biosynthesis; isopentenyl diphosphate biosynthesis via DXP pathway; isopentenyl diphosphate from 1-deoxy-D-xylulose 5-phosphate: step 2/6. In terms of biological role, catalyzes the formation of 4-diphosphocytidyl-2-C-methyl-D-erythritol from CTP and 2-C-methyl-D-erythritol 4-phosphate (MEP). This is 2-C-methyl-D-erythritol 4-phosphate cytidylyltransferase from Leptospira interrogans serogroup Icterohaemorrhagiae serovar copenhageni (strain Fiocruz L1-130).